The following is a 946-amino-acid chain: MKPLSSPLQQYWQTVVERLPEPLAEESLSAQAKSVLTFSDFVQDSVIAHPEWLTELESQPPQADEWQHYASWLQEALSNVSDEAGLMRELRLFRRRIMVRIAWAQTLALVTEESILQQLSHLAETLIVAARDWLYDACCREWGTPCNAQGEAQPLLILGMGKLGGGELNFSSDIDLIFAWPEHGCTQGGRRELDNAQFFTRMGQRLIKVLDQPTQDGFVYRVDMRLRPFGESGPLVLSFAALEDYYQEQGRDWERYAMVKARIMGDSDGVYANELRAMLRPFVFRRYIDFSVIQSLRNMKGMIAREVRRRGLTDNIKLGAGGIREIEFIVQVFQLIRGGREPSLQSRALLPTLSAIAALHLLSENDAEQLRVAYLFLRRLENLLQSINDEQTQTLPFDELNRARLAWAMDFADWPQLTGVLTAHMANVRRVFNELIGDDESETQEESLSEQWRELWQDALQEDDTTPVLAHLSEDDRKQVLMLIADFRKELDKRTIGPRGRQVLDHLMPHLLSDVCAREDAAVTLSRITALLVGIVTRTTYLELLSEFPAALKHLISLCAASPMIASQLARYPLLLDELLDPNTLYQPTATDAYRDELRQYLLRVPEDDEEQQLEALRQFKQAQLLRIAAADIAGTLPVMKVSDHLTWLAEAMIDAVVQQAWVQMVARYGKPNHLNEREGRGFAVVGYGKLGGWELGYSSDLDLIFLHDCPMDAMTDGEREIDGRQFYLRLAQRIMHLFSTRTSSGILYEVDARLRPSGAAGMLVTSAEAFADYQKNEAWTWEHQALVRARVVYGDPQLTAHFDAVRREIMTLPREGKTLQTEVREMREKMRAHLGNKHRDRFDIKADEGGITDIEFITQYLVLRYAHEKPKLTRWSDNVRILELLAQNDIMEEQEAMALTRAYTTLRDELHHLALQELPGHVSEDCFTAERELVRASWQKWLVEE.

The adenylyl removase stretch occupies residues 1–440 (MKPLSSPLQQ…VFNELIGDDE (440 aa)). Residues 449-946 (SEQWRELWQD…ASWQKWLVEE (498 aa)) are adenylyl transferase.

The protein belongs to the GlnE family. Mg(2+) serves as cofactor.

It catalyses the reaction [glutamine synthetase]-O(4)-(5'-adenylyl)-L-tyrosine + phosphate = [glutamine synthetase]-L-tyrosine + ADP. The catalysed reaction is [glutamine synthetase]-L-tyrosine + ATP = [glutamine synthetase]-O(4)-(5'-adenylyl)-L-tyrosine + diphosphate. Functionally, involved in the regulation of glutamine synthetase GlnA, a key enzyme in the process to assimilate ammonia. When cellular nitrogen levels are high, the C-terminal adenylyl transferase (AT) inactivates GlnA by covalent transfer of an adenylyl group from ATP to specific tyrosine residue of GlnA, thus reducing its activity. Conversely, when nitrogen levels are low, the N-terminal adenylyl removase (AR) activates GlnA by removing the adenylyl group by phosphorolysis, increasing its activity. The regulatory region of GlnE binds the signal transduction protein PII (GlnB) which indicates the nitrogen status of the cell. The chain is Bifunctional glutamine synthetase adenylyltransferase/adenylyl-removing enzyme from Escherichia coli O6:H1 (strain CFT073 / ATCC 700928 / UPEC).